Consider the following 457-residue polypeptide: tRNA modification GTPase MnmE (457 aa).

Positions 25, 87, and 126 each coordinate (6S)-5-formyl-5,6,7,8-tetrahydrofolate. The region spanning 223 to 377 (GISTAIIGRP…IEERINNLFF (155 aa)) is the TrmE-type G domain. Asparagine 233 provides a ligand contact to K(+). Residues 233 to 238 (NVGKSS), 252 to 258 (TDIAGTT), and 277 to 280 (DTAG) each bind GTP. Serine 237 is a binding site for Mg(2+). Threonine 252, isoleucine 254, and threonine 257 together coordinate K(+). Threonine 258 contacts Mg(2+). Lysine 457 provides a ligand contact to (6S)-5-formyl-5,6,7,8-tetrahydrofolate.

The protein belongs to the TRAFAC class TrmE-Era-EngA-EngB-Septin-like GTPase superfamily. TrmE GTPase family. As to quaternary structure, homodimer. Heterotetramer of two MnmE and two MnmG subunits. The cofactor is K(+).

The protein localises to the cytoplasm. Its function is as follows. Exhibits a very high intrinsic GTPase hydrolysis rate. Involved in the addition of a carboxymethylaminomethyl (cmnm) group at the wobble position (U34) of certain tRNAs, forming tRNA-cmnm(5)s(2)U34. This Streptococcus pneumoniae (strain Hungary19A-6) protein is tRNA modification GTPase MnmE.